A 250-amino-acid chain; its full sequence is tRNA (guanine-N(7)-)-methyltransferase (250 aa).

Residues glutamate 79, glutamate 104, aspartate 131, and aspartate 154 each contribute to the S-adenosyl-L-methionine site. Aspartate 154 is an active-site residue. Substrate-binding positions include lysine 158, aspartate 190, and threonine 228–glutamate 231.

The protein belongs to the class I-like SAM-binding methyltransferase superfamily. TrmB family.

It carries out the reaction guanosine(46) in tRNA + S-adenosyl-L-methionine = N(7)-methylguanosine(46) in tRNA + S-adenosyl-L-homocysteine. It participates in tRNA modification; N(7)-methylguanine-tRNA biosynthesis. Catalyzes the formation of N(7)-methylguanine at position 46 (m7G46) in tRNA. The chain is tRNA (guanine-N(7)-)-methyltransferase from Actinobacillus pleuropneumoniae serotype 5b (strain L20).